Here is a 193-residue protein sequence, read N- to C-terminus: Large ribosomal subunit protein uL5 (193 aa).

This sequence belongs to the universal ribosomal protein uL5 family. In terms of assembly, part of the 50S ribosomal subunit; part of the 5S rRNA/L5/L18/L25 subcomplex. Contacts the 5S rRNA and the P site tRNA. Forms a bridge to the 30S subunit in the 70S ribosome.

Functionally, this is one of the proteins that bind and probably mediate the attachment of the 5S RNA into the large ribosomal subunit, where it forms part of the central protuberance. In the 70S ribosome it contacts protein S13 of the 30S subunit (bridge B1b), connecting the 2 subunits; this bridge is implicated in subunit movement. Contacts the P site tRNA; the 5S rRNA and some of its associated proteins might help stabilize positioning of ribosome-bound tRNAs. The protein is Large ribosomal subunit protein uL5 of Corynebacterium urealyticum (strain ATCC 43042 / DSM 7109).